The sequence spans 350 residues: Glyceraldehyde-3-phosphate dehydrogenase (350 aa).

NAD(+) contacts are provided by residues 10–11, Asp-36, Arg-82, and Ser-125; that span reads RI. Residues 161–163, Thr-193, 222–223, and Arg-245 contribute to the D-glyceraldehyde 3-phosphate site; these read SCT and TG. Cys-162 acts as the Nucleophile in catalysis. Asn-331 contacts NAD(+).

Belongs to the glyceraldehyde-3-phosphate dehydrogenase family. Homotetramer.

The protein localises to the cytoplasm. It carries out the reaction D-glyceraldehyde 3-phosphate + phosphate + NAD(+) = (2R)-3-phospho-glyceroyl phosphate + NADH + H(+). It participates in carbohydrate degradation; glycolysis; pyruvate from D-glyceraldehyde 3-phosphate: step 1/5. Its function is as follows. Catalyzes the oxidative phosphorylation of glyceraldehyde 3-phosphate (G3P) to 1,3-bisphosphoglycerate (BPG) using the cofactor NAD. The first reaction step involves the formation of a hemiacetal intermediate between G3P and a cysteine residue, and this hemiacetal intermediate is then oxidized to a thioester, with concomitant reduction of NAD to NADH. The reduced NADH is then exchanged with the second NAD, and the thioester is attacked by a nucleophilic inorganic phosphate to produce BPG. The sequence is that of Glyceraldehyde-3-phosphate dehydrogenase (gap) from Treponema pallidum (strain Nichols).